The following is a 684-amino-acid chain: Macrolide export ATP-binding/permease protein MacB (684 aa).

Residues 2–243 (IQLYGLRKDY…RSRLANSRAE (242 aa)) enclose the ABC transporter domain. 38–45 (GSSGSGKT) lines the ATP pocket. The next 5 membrane-spanning stretches (helical) occupy residues 248–268 (PASA…VLAL), 275–295 (TVLT…TMEL), 563–583 (LVIA…IMLV), 615–635 (VLCV…SVLV), and 644–664 (AMSI…GIVF).

It belongs to the ABC transporter superfamily. Macrolide exporter (TC 3.A.1.122) family. In terms of assembly, homodimer.

The protein resides in the cell inner membrane. Functionally, non-canonical ABC transporter that contains transmembrane domains (TMD), which form a pore in the inner membrane, and an ATP-binding domain (NBD), which is responsible for energy generation. Confers resistance against macrolides. The chain is Macrolide export ATP-binding/permease protein MacB from Rhodopirellula baltica (strain DSM 10527 / NCIMB 13988 / SH1).